Here is a 286-residue protein sequence, read N- to C-terminus: MIILDGKKVASRRKEELTAKISKYHNKGLRKPKLVVIMVGNDPASEVYVSHKIKVANEVGIYSELLRFDKDIKKEELYNKINELNNDQNIDGILLQLPLPIDFIEEDYLQAITPSKDVDGFHYINQGKMLQGYDTVYPCTPLGIINLLEEYNISVKNKDITLIGTSNIVGKPLGMMLLNNQATITMCNKNTKNIKNHTINADIIISATGKQFIITEDMIKKDAVIIDVGIIRDPVTNKLVGDVDFEKVKLKSSYITPVPGGVGPMTVITLMENTFVLYEKHINKSK.

Residues Gly-164–Ser-166 and Ile-230 contribute to the NADP(+) site.

The protein belongs to the tetrahydrofolate dehydrogenase/cyclohydrolase family. As to quaternary structure, homodimer.

It catalyses the reaction (6R)-5,10-methylene-5,6,7,8-tetrahydrofolate + NADP(+) = (6R)-5,10-methenyltetrahydrofolate + NADPH. It carries out the reaction (6R)-5,10-methenyltetrahydrofolate + H2O = (6R)-10-formyltetrahydrofolate + H(+). It participates in one-carbon metabolism; tetrahydrofolate interconversion. Its function is as follows. Catalyzes the oxidation of 5,10-methylenetetrahydrofolate to 5,10-methenyltetrahydrofolate and then the hydrolysis of 5,10-methenyltetrahydrofolate to 10-formyltetrahydrofolate. This chain is Bifunctional protein FolD, found in Mesoplasma florum (strain ATCC 33453 / NBRC 100688 / NCTC 11704 / L1) (Acholeplasma florum).